A 545-amino-acid polypeptide reads, in one-letter code: Chaperonin GroEL (545 aa).

ATP is bound by residues 29-32 (TMGP), K50, 86-90 (DGTTT), G414, 477-479 (NAA), and D493.

It belongs to the chaperonin (HSP60) family. In terms of assembly, forms a cylinder of 14 subunits composed of two heptameric rings stacked back-to-back. Interacts with the co-chaperonin GroES.

The protein localises to the cytoplasm. The catalysed reaction is ATP + H2O + a folded polypeptide = ADP + phosphate + an unfolded polypeptide.. Functionally, together with its co-chaperonin GroES, plays an essential role in assisting protein folding. The GroEL-GroES system forms a nano-cage that allows encapsulation of the non-native substrate proteins and provides a physical environment optimized to promote and accelerate protein folding. The sequence is that of Chaperonin GroEL from Campylobacter fetus subsp. fetus (strain 82-40).